Here is a 235-residue protein sequence, read N- to C-terminus: (5-formylfuran-3-yl)methyl phosphate synthase (235 aa).

Catalysis depends on K27, which acts as the Schiff-base intermediate with substrate. The active-site Proton acceptor is the K86.

It belongs to the MfnB family.

It catalyses the reaction 2 D-glyceraldehyde 3-phosphate = 4-(hydroxymethyl)-2-furancarboxaldehyde phosphate + phosphate + 2 H2O. The protein operates within cofactor biosynthesis; methanofuran biosynthesis. In terms of biological role, catalyzes the formation of 4-(hydroxymethyl)-2-furancarboxaldehyde phosphate (4-HFC-P) from two molecules of glyceraldehyde-3-P (GA-3-P). The sequence is that of (5-formylfuran-3-yl)methyl phosphate synthase from Archaeoglobus fulgidus (strain ATCC 49558 / DSM 4304 / JCM 9628 / NBRC 100126 / VC-16).